The sequence spans 344 residues: Methionine import ATP-binding protein MetN (344 aa).

Residues 2–241 (IELQGLSQRF…PQHEVTRAMI (240 aa)) form the ABC transporter domain. 38–45 (GRSGAGKS) is a binding site for ATP.

The protein belongs to the ABC transporter superfamily. Methionine importer (TC 3.A.1.24) family. In terms of assembly, the complex is composed of two ATP-binding proteins (MetN), two transmembrane proteins (MetI) and a solute-binding protein (MetQ).

The protein resides in the cell inner membrane. It catalyses the reaction L-methionine(out) + ATP + H2O = L-methionine(in) + ADP + phosphate + H(+). It carries out the reaction D-methionine(out) + ATP + H2O = D-methionine(in) + ADP + phosphate + H(+). Its function is as follows. Part of the ABC transporter complex MetNIQ involved in methionine import. Responsible for energy coupling to the transport system. The chain is Methionine import ATP-binding protein MetN from Cupriavidus metallidurans (strain ATCC 43123 / DSM 2839 / NBRC 102507 / CH34) (Ralstonia metallidurans).